The primary structure comprises 599 residues: Leucine zipper putative tumor suppressor 1 (599 aa).

Residue Gly2 is the site of N-myristoyl glycine attachment. Disordered regions lie at residues 135 to 190 (GAIL…TTSS) and 288 to 324 (EFAS…KSQR). Positions 153 to 162 (PPDKPKEQEL) are enriched in basic and acidic residues. A compositionally biased stretch (polar residues) spans 174–190 (SGRNSMSSLPTHSTTSS). Residues 256–572 (LSTDECTIQE…LEKALQQLAR (317 aa)) adopt a coiled-coil conformation. Positions 288–313 (EFASGQTFEERPRRTRDELECLEPKS) are enriched in basic and acidic residues.

Belongs to the LZTS family. In terms of assembly, binds EEF1G, TLK2 and CDK1. Phosphorylated on serine residues. Hyperphosphorylated by the cAMP-dependent kinase PKA during cell-cycle progression.

Its subcellular location is the cytoplasm. It localises to the cell membrane. It is found in the cell projection. The protein localises to the dendritic spine. The protein resides in the postsynaptic density. Its subcellular location is the synapse. Its function is as follows. Involved in the regulation of cell growth. May stabilize the active CDC2-cyclin B1 complex and thereby contribute to the regulation of the cell cycle and the prevention of uncontrolled cell proliferation. May act as tumor suppressor. In Mus musculus (Mouse), this protein is Leucine zipper putative tumor suppressor 1 (Lzts1).